A 116-amino-acid polypeptide reads, in one-letter code: U16-barytoxin-Tl1f (116 aa).

The first 20 residues, 1-20, serve as a signal peptide directing secretion; sequence MKTIIVFLSLLVLATKFGDA. Residues 21–74 constitute a propeptide that is removed on maturation; sequence NEGVNQEQMKEVIQNEFREDFLNEMAPMSLLQQLEAIESTLLEKEADRNSRQKR. 3 cysteine pairs are disulfide-bonded: Cys75-Cys90, Cys82-Cys95, and Cys89-Cys110. Residue Asn85 is glycosylated (N-linked (GlcNAc...) asparagine).

This sequence belongs to the neurotoxin 14 (magi-1) family. 06 (ICK-Trit) subfamily. In terms of tissue distribution, expressed by the venom gland.

It localises to the secreted. Functionally, ion channel inhibitor. In Trittame loki (Brush-footed trapdoor spider), this protein is U16-barytoxin-Tl1f.